A 297-amino-acid chain; its full sequence is tRNA pseudouridine synthase B (297 aa).

The active-site Nucleophile is aspartate 39.

Belongs to the pseudouridine synthase TruB family. Type 1 subfamily.

The catalysed reaction is uridine(55) in tRNA = pseudouridine(55) in tRNA. Functionally, responsible for synthesis of pseudouridine from uracil-55 in the psi GC loop of transfer RNAs. The polypeptide is tRNA pseudouridine synthase B (Lactobacillus acidophilus (strain ATCC 700396 / NCK56 / N2 / NCFM)).